Consider the following 169-residue polypeptide: Crossover junction endodeoxyribonuclease RuvC (169 aa).

Residues aspartate 11, glutamate 71, and aspartate 143 contribute to the active site. Residues aspartate 11, glutamate 71, and aspartate 143 each contribute to the Mg(2+) site.

The protein belongs to the RuvC family. In terms of assembly, homodimer which binds Holliday junction (HJ) DNA. The HJ becomes 2-fold symmetrical on binding to RuvC with unstacked arms; it has a different conformation from HJ DNA in complex with RuvA. In the full resolvosome a probable DNA-RuvA(4)-RuvB(12)-RuvC(2) complex forms which resolves the HJ. It depends on Mg(2+) as a cofactor.

Its subcellular location is the cytoplasm. The catalysed reaction is Endonucleolytic cleavage at a junction such as a reciprocal single-stranded crossover between two homologous DNA duplexes (Holliday junction).. The RuvA-RuvB-RuvC complex processes Holliday junction (HJ) DNA during genetic recombination and DNA repair. Endonuclease that resolves HJ intermediates. Cleaves cruciform DNA by making single-stranded nicks across the HJ at symmetrical positions within the homologous arms, yielding a 5'-phosphate and a 3'-hydroxyl group; requires a central core of homology in the junction. The consensus cleavage sequence is 5'-(A/T)TT(C/G)-3'. Cleavage occurs on the 3'-side of the TT dinucleotide at the point of strand exchange. HJ branch migration catalyzed by RuvA-RuvB allows RuvC to scan DNA until it finds its consensus sequence, where it cleaves and resolves the cruciform DNA. The sequence is that of Crossover junction endodeoxyribonuclease RuvC from Allorhizobium ampelinum (strain ATCC BAA-846 / DSM 112012 / S4) (Agrobacterium vitis (strain S4)).